Reading from the N-terminus, the 416-residue chain is Gamma-glutamyl phosphate reductase (416 aa).

It belongs to the gamma-glutamyl phosphate reductase family.

The protein resides in the cytoplasm. The enzyme catalyses L-glutamate 5-semialdehyde + phosphate + NADP(+) = L-glutamyl 5-phosphate + NADPH + H(+). Its pathway is amino-acid biosynthesis; L-proline biosynthesis; L-glutamate 5-semialdehyde from L-glutamate: step 2/2. Functionally, catalyzes the NADPH-dependent reduction of L-glutamate 5-phosphate into L-glutamate 5-semialdehyde and phosphate. The product spontaneously undergoes cyclization to form 1-pyrroline-5-carboxylate. The sequence is that of Gamma-glutamyl phosphate reductase from Streptococcus equi subsp. zooepidemicus (strain MGCS10565).